Reading from the N-terminus, the 427-residue chain is UDP-N-acetylglucosamine--N-acetylmuramyl-(pentapeptide) pyrophosphoryl-undecaprenol N-acetylglucosamine transferase (427 aa).

Residues 29–31, Asn-141, Arg-177, Ser-205, Ile-258, and Gln-303 each bind UDP-N-acetyl-alpha-D-glucosamine; that span reads TGG. A disordered region spans residues 408-427; sequence SLHPIPDSRFPIRTSAGGAQ.

Belongs to the glycosyltransferase 28 family. MurG subfamily.

It localises to the cell inner membrane. The enzyme catalyses di-trans,octa-cis-undecaprenyl diphospho-N-acetyl-alpha-D-muramoyl-L-alanyl-D-glutamyl-meso-2,6-diaminopimeloyl-D-alanyl-D-alanine + UDP-N-acetyl-alpha-D-glucosamine = di-trans,octa-cis-undecaprenyl diphospho-[N-acetyl-alpha-D-glucosaminyl-(1-&gt;4)]-N-acetyl-alpha-D-muramoyl-L-alanyl-D-glutamyl-meso-2,6-diaminopimeloyl-D-alanyl-D-alanine + UDP + H(+). Its pathway is cell wall biogenesis; peptidoglycan biosynthesis. Its function is as follows. Cell wall formation. Catalyzes the transfer of a GlcNAc subunit on undecaprenyl-pyrophosphoryl-MurNAc-pentapeptide (lipid intermediate I) to form undecaprenyl-pyrophosphoryl-MurNAc-(pentapeptide)GlcNAc (lipid intermediate II). This Xanthomonas campestris pv. campestris (strain 8004) protein is UDP-N-acetylglucosamine--N-acetylmuramyl-(pentapeptide) pyrophosphoryl-undecaprenol N-acetylglucosamine transferase.